Consider the following 412-residue polypeptide: Indian hedgehog B protein (412 aa).

A signal peptide spans 1 to 23 (MRLSTAAALLTGFILAFSPAYDG). C24 is lipidated: N-palmitoyl cysteine. Ca(2+) is bound by residues E89, E90, D95, T125, E126, D129, and D131. Zn(2+) is bound by residues H140, D147, and H182. G197 carries Cholesterol glycine ester lipidation.

It belongs to the hedgehog family. In terms of assembly, multimer. Interacts with BOC and CDON. Interacts with PTCH1. Interacts with glypican GPC3. Cholesterylation is required for N-product targeting to lipid rafts and multimerization. Post-translationally, the C-terminal domain displays an autoproteolysis activity and a cholesterol transferase activity. Both activities result in the cleavage of the full-length protein and covalent attachment of a cholesterol moiety to the C-terminal of the newly generated N-product. The N-product is the active species in both local and long-range signaling, whereas the C-product is degraded in the endoplasmic reticulum. In terms of processing, N-palmitoylation by HHAT of N-product is required for indian hedgehog protein N-product multimerization and full activity. Expressed exclusively in the notochord.

The protein localises to the cell membrane. It is found in the endoplasmic reticulum membrane. It localises to the golgi apparatus membrane. The protein resides in the secreted. The catalysed reaction is glycyl-L-cysteinyl-[protein] + cholesterol + H(+) = [protein]-C-terminal glycyl cholesterol ester + N-terminal L-cysteinyl-[protein]. Functionally, signal involved in the early induction and patterning of anterodorsal ectoderm, nervous system and somites. It is involved in the regulation of endochondral skeleton formation, and the development of retinal pigment epithelium (RPE), photoreceptors and periocular tissues. In terms of biological role, the C-terminal part of the indian hedgehog protein precursor displays an autoproteolysis and a cholesterol transferase activity. Both activities result in the cleavage of the full-length protein into two parts followed by the covalent attachment of a cholesterol moiety to the C-terminal of the newly generated N-product. Both activities occur in the endoplasmic reticulum. Its function is as follows. The dually lipidated indian hedgehog protein N-product is a morphogen which is essential for a variety of patterning events during development. Binds to the patched (PTCH1) receptor, which functions in association with smoothened (SMO), to activate the transcription of target genes. In the notochord, induces somite patterning and muscle pioneer differentiation. The sequence is that of Indian hedgehog B protein (ihhb) from Danio rerio (Zebrafish).